The primary structure comprises 507 residues: tRNA (guanine(6)-N(2))-methyltransferase THUMP3 (507 aa).

One can recognise a THUMP domain in the interval 165–285; it reads KIDQRNVKKE…DNEVIVGIAL (121 aa).

The protein belongs to the methyltransferase superfamily. Part of the heterodimeric THUMPD3-TRM112 methyltransferase complex; this complex forms an active tRNA methyltransferase, where TRMT112 acts as an activator of the catalytic subunit THUMPD3.

Its subcellular location is the cytoplasm. It carries out the reaction guanosine(6) in tRNA + S-adenosyl-L-methionine = N(2)-methylguanosine(6) in tRNA + S-adenosyl-L-homocysteine + H(+). The catalysed reaction is guanosine(7) in tRNA + S-adenosyl-L-methionine = N(2)-methylguanosine(7) in tRNA + S-adenosyl-L-homocysteine + H(+). In terms of biological role, catalytic subunit of the THUMPD3-TRM112 methyltransferase complex, that specifically mediates the S-adenosyl-L-methionine-dependent N(2)-methylation of guanosine nucleotide at position 6 (m2G6) in tRNAs. This is one of the major tRNA (guanine-N(2))-methyltransferases. Also catalyzes the S-adenosyl-L-methionine-dependent N(2)-methylation of guanosine nucleotide at position 7 of tRNA(Trp). The chain is tRNA (guanine(6)-N(2))-methyltransferase THUMP3 from Homo sapiens (Human).